Here is a 312-residue protein sequence, read N- to C-terminus: Protoheme IX farnesyltransferase (312 aa).

8 helical membrane passes run 34 to 54, 56 to 76, 119 to 139, 152 to 172, 179 to 199, 225 to 245, 247 to 267, and 283 to 303; these read LVIFTALVGLMIAPGHVHPVL, FTAILCIAVGAGASGALNMAL, ALVNWYAGGLLAFTIFFYVVI, IVIGGAAGALPPVVAWAAATG, LLLFLIIFFWTPPHFWALALF, ILLYTIVLVAIAAAPWPLGYF, WVYGVTSLVLGAGMLVLAINV, and LFAFSILYLFALFAVLLLDVL.

This sequence belongs to the UbiA prenyltransferase family. Protoheme IX farnesyltransferase subfamily.

The protein resides in the cell inner membrane. The enzyme catalyses heme b + (2E,6E)-farnesyl diphosphate + H2O = Fe(II)-heme o + diphosphate. Its pathway is porphyrin-containing compound metabolism; heme O biosynthesis; heme O from protoheme: step 1/1. Converts heme B (protoheme IX) to heme O by substitution of the vinyl group on carbon 2 of heme B porphyrin ring with a hydroxyethyl farnesyl side group. The sequence is that of Protoheme IX farnesyltransferase from Nitrobacter hamburgensis (strain DSM 10229 / NCIMB 13809 / X14).